A 214-amino-acid polypeptide reads, in one-letter code: Outer-membrane lipoprotein LolB (214 aa).

An N-terminal signal peptide occupies residues 1 to 25 (MNNLKRFTESIFSCIALSTLLFLGG). Cys26 carries N-palmitoyl cysteine lipidation. Cys26 is lipidated: S-diacylglycerol cysteine.

It belongs to the LolB family. As to quaternary structure, monomer.

Its subcellular location is the cell outer membrane. Its function is as follows. Plays a critical role in the incorporation of lipoproteins in the outer membrane after they are released by the LolA protein. This Shewanella putrefaciens (strain CN-32 / ATCC BAA-453) protein is Outer-membrane lipoprotein LolB.